The primary structure comprises 348 residues: Anthranilate phosphoribosyltransferase (348 aa).

Residues G89, 92–93, T97, 99–102, 117–125, and S129 each bind 5-phospho-alpha-D-ribose 1-diphosphate; these read GD, NIST, and KHGNRSVSS. G89 is a binding site for anthranilate. S101 contributes to the Mg(2+) binding site. Residue N120 participates in anthranilate binding. Position 175 (R175) interacts with anthranilate. 2 residues coordinate Mg(2+): D233 and E234.

This sequence belongs to the anthranilate phosphoribosyltransferase family. As to quaternary structure, homodimer. Mg(2+) serves as cofactor.

The catalysed reaction is N-(5-phospho-beta-D-ribosyl)anthranilate + diphosphate = 5-phospho-alpha-D-ribose 1-diphosphate + anthranilate. Its pathway is amino-acid biosynthesis; L-tryptophan biosynthesis; L-tryptophan from chorismate: step 2/5. Functionally, catalyzes the transfer of the phosphoribosyl group of 5-phosphorylribose-1-pyrophosphate (PRPP) to anthranilate to yield N-(5'-phosphoribosyl)-anthranilate (PRA). The sequence is that of Anthranilate phosphoribosyltransferase from Shewanella sp. (strain W3-18-1).